A 378-amino-acid chain; its full sequence is MDLIGLLKSQFLCHLVFCYVFIASGLIVNAIQLCTLVIWPINKQLFRKINARLCYCVSSQLVMLLEWWSGTECTIYTDPKACPHYGKENAIVVLNHKFEIDFLCGWSLAERLGILGNSKVLAKKELAYVPIIGWMWYFVEMIFCTRKWEQDRQTVAKSLLHLRDYPEKYLFLIHCEGTRFTEKKHQISMQVAQAKGLPSLKHHLLPRTKGFAITVKCLRDVVPAVYDCTLNFRNNENPTLLGVLNGKKYHADCYVRRIPMEDIPEDEDKCSAWLHKLYQEKDAFQEEYYRTGVFPETPWVPPRRPWSLVNWLFWASLLLYPFFQFLVSMVSSGSSVTLASLVLIFCMASMGVRWMIGVTEIDKGSAYGNIDNKRKQTD.

Residues 11–31 (FLCHLVFCYVFIASGLIVNAI) form a helical membrane-spanning segment. The HXXXXD motif motif lies at 96–101 (HKFEID). 3 helical membrane passes run 125-145 (ELAY…IFCT), 311-331 (WLFW…SMVS), and 338-358 (LASL…MIGV).

The protein belongs to the 1-acyl-sn-glycerol-3-phosphate acyltransferase family. Expressed at a high levels in the brain, at intermediate or low levels in skeletal muscles, gut, kidney, spleen and lung. Barely detectable in heart and liver.

The protein localises to the endoplasmic reticulum membrane. It carries out the reaction a 1-acyl-sn-glycero-3-phosphate + an acyl-CoA = a 1,2-diacyl-sn-glycero-3-phosphate + CoA. The enzyme catalyses (4Z,7Z,10Z,13Z,16Z,19Z)-docosahexaenoyl-CoA + 1-hexadecanoyl-sn-glycero-3-phosphate = 1-hexadecanoyl-2-(4Z,7Z,10Z,13Z,16Z,19Z-docosahexaenoyl)-sn-glycero-3-phosphate + CoA. The catalysed reaction is 1-octadecanoyl-sn-glycero-3-phosphate + (9Z,12Z)-octadecadienoyl-CoA = 1-octadecanoyl-2-(9Z,12Z-octadecadienoyl)-sn-glycero-3-phosphate + CoA. It catalyses the reaction 1-octadecanoyl-sn-glycero-3-phosphate + (4Z,7Z,10Z,13Z,16Z,19Z)-docosahexaenoyl-CoA = 1-octadecanoyl-2-(4Z,7Z,10Z,13Z,16Z,19Z-docosahexaenoyl)-sn-glycero-3-phosphate + CoA. It carries out the reaction (4Z,7Z,10Z,13Z,16Z,19Z)-docosahexaenoyl-CoA + 1-(9Z-octadecenoyl)-sn-glycero-3-phosphate = 1-(9Z-octadecenoyl)-2-(4Z,7Z,10Z,13Z,16Z,19Z-docosahexaenoyl)-sn-glycero-3-phosphate + CoA. It functions in the pathway phospholipid metabolism; CDP-diacylglycerol biosynthesis; CDP-diacylglycerol from sn-glycerol 3-phosphate: step 2/3. Functionally, converts 1-acyl-sn-glycerol-3-phosphate (lysophosphatidic acid or LPA) into 1,2-diacyl-sn-glycerol-3-phosphate (phosphatidic acid or PA) by incorporating an acyl moiety at the sn-2 position of the glycerol backbone. Exhibits high acyl-CoA specificity for polyunsaturated fatty acyl-CoA, especially docosahexaenoyl-CoA (22:6-CoA, DHA-CoA). In Mus musculus (Mouse), this protein is 1-acyl-sn-glycerol-3-phosphate acyltransferase delta (Agpat4).